A 487-amino-acid chain; its full sequence is Protein Optix (487 aa).

Positions 154-214 form a DNA-binding region, homeobox; it reads WDGEQKTHCF…KNRRQRDRAA (61 aa). Disordered regions lie at residues 182-330 and 443-463; these read NPTK…GAGP and ASVGGGGGNQHHEPTTTGYHH. Over residues 255-277 the composition is skewed to polar residues; sequence GTHSPVPSSLQLQHSPGSTSNGA. Residues 278-293 are compositionally biased toward basic and acidic residues; sequence NDREESLSVDDDKPRD. The segment covering 294–312 has biased composition (low complexity); sequence LSGSLPLPLSLPLPLASPT. Gly residues predominate over residues 321–330; sequence GYGGGAGAGP.

It belongs to the SIX/Sine oculis homeobox family. In terms of tissue distribution, expressed during early development of the head. First expressed in a band around the anterior end of stage 5 blastoderm embryo, at 93% to 85% egg length. By gastrula stage, site of expression shifts to the dorsal-anterior region. At stage 12, expression is found in the clypeolabrum, the stomodaeum, and in ectoderm dorsal to the future supraesophageal ganglion.

The protein resides in the nucleus. Functionally, may be involved in head or eye development; development of the clypeolabrum and several head sensory organs. The chain is Protein Optix (Optix) from Drosophila melanogaster (Fruit fly).